We begin with the raw amino-acid sequence, 573 residues long: Squalene monooxygenase (573 aa).

At 1–19 (MWTFLGIATFTYFYKKCGD) the chain is on the cytoplasmic side. Residues 1 to 99 (MWTFLGIATF…EQLESKRRRK (99 aa)) are interaction with MARCHF6. Residues 20–40 (VTLANKELLLCVLVFLSLGLV) lie within the membrane without spanning it. At 41–573 (LSYRCRHRNG…IYSEMKYLVH (533 aa)) the chain is on the cytoplasmic side. The required for degradation in response to high membrane cholesterol levels stretch occupies residues 61–72 (QFAAFSDILSAL). Residues 100-573 (EVNLSETTLT…IYSEMKYLVH (474 aa)) are sufficient for catalytic activity. FAD contacts are provided by residues 132-133 (VL), 152-153 (ER), R160, R233, V249, D407, and M420. The hydrophobic; mediates interaction with membranes stretch occupies residues 515-573 (PLLLIRHFFSVAVYATYFCFKSEPWATKPRALFSSGAILYKACSIIFPLIYSEMKYLVH).

This sequence belongs to the squalene monooxygenase family. In terms of assembly, interacts (via N-terminal domain) with MARCHF6. Interacts with SMIM22; this interaction modulates lipid droplet formation. FAD is required as a cofactor. Ubiquitinated by MARCHF6 in response to high cholesterol levels in intracellular membranes, leading to proteasomal degradation. As to expression, detected in lever (at protein level).

It localises to the microsome membrane. It is found in the endoplasmic reticulum membrane. It catalyses the reaction squalene + reduced [NADPH--hemoprotein reductase] + O2 = (S)-2,3-epoxysqualene + oxidized [NADPH--hemoprotein reductase] + H2O + H(+). It participates in terpene metabolism; lanosterol biosynthesis; lanosterol from farnesyl diphosphate: step 2/3. Its activity is regulated as follows. Inhibited by NB-598 ((E)N-ethyl-N-(6,6-dimethyl-2-hepten-4-ynyl)-3-[(3,3'-bi-thiophen-5-yl)methoxy]benzene-methanamine). Contrary to fungal enzymes, the mammalian enzyme is only slightly inhibited by terbinafine. Catalyzes the stereospecific oxidation of squalene to (S)-2,3-epoxysqualene, and is considered to be a rate-limiting enzyme in steroid biosynthesis. The protein is Squalene monooxygenase (Sqle) of Rattus norvegicus (Rat).